We begin with the raw amino-acid sequence, 262 residues long: MNLSVAPKEIAGHGLLDGKVVVVTAAAGTGIGSATARRALAEGADVVISDHHERRLGETAAELSALGLGRVEHVVCDVTSTAQVDALIDSTTARMGRLDVLVNNAGLGGQTPVADMTDDEWDRVLDVSLTSVFRATRAALRYFRDAPHGGVIVNNASVLGWRAQHSQSHYAAAKAGVMALTRCSAIEAAEYGVRINAVSPSIARHKFLDKTASAELLDRLAAGEAFGRAAEPWEVAATIAFLASDYSSYLTGEVISVSCQHP.

Residues Asp50, Asp77, Val78, Asn104, Tyr170, Lys174, and Ala203 each contribute to the NAD(+) site. Tyr170 functions as the Proton acceptor in the catalytic mechanism.

Belongs to the short-chain dehydrogenases/reductases (SDR) family.

It carries out the reaction (5R,7aS)-5-hydroxy-7a-methyl-1-oxo-2,3,5,6,7,7a-hexahydro-1H-indene-carboxyl-CoA + NAD(+) = (7aS)-7a-methyl-1,5-dioxo-2,3,5,6,7,7a-hexahydro-1H-indene-carboxyl-CoA + NADH + H(+). It functions in the pathway steroid metabolism; cholesterol degradation. Requires the presence of IpdC. Its function is as follows. Involved in the final steps of cholesterol and steroid degradation. Probably catalyzes the oxidation of the 5-OH group of (5R,7aS)-5-hydroxy-7a-methyl-1-oxo-2,3,5,6,7,7a-hexahydro-1H-indene-carboxyl-CoA, leading to the formation of HIEC-CoA. In Mycobacterium tuberculosis (strain ATCC 25618 / H37Rv), this protein is (5R,7aS)-5-hydroxy-7a-methyl-1-oxo-2,3,5,6,7,7a-hexahydro-1H-indene-carboxyl-CoA reductase.